The primary structure comprises 226 residues: Deoxyribose-phosphate aldolase (226 aa).

Residue Asp-84 is the Proton donor/acceptor of the active site. Residue Lys-146 is the Schiff-base intermediate with acetaldehyde of the active site. The active-site Proton donor/acceptor is the Lys-188.

Belongs to the DeoC/FbaB aldolase family. DeoC type 1 subfamily.

Its subcellular location is the cytoplasm. It catalyses the reaction 2-deoxy-D-ribose 5-phosphate = D-glyceraldehyde 3-phosphate + acetaldehyde. It functions in the pathway carbohydrate degradation; 2-deoxy-D-ribose 1-phosphate degradation; D-glyceraldehyde 3-phosphate and acetaldehyde from 2-deoxy-alpha-D-ribose 1-phosphate: step 2/2. Its function is as follows. Catalyzes a reversible aldol reaction between acetaldehyde and D-glyceraldehyde 3-phosphate to generate 2-deoxy-D-ribose 5-phosphate. This Pyrobaculum arsenaticum (strain DSM 13514 / JCM 11321 / PZ6) protein is Deoxyribose-phosphate aldolase.